The sequence spans 326 residues: DNA repair protein XRCC4 (326 aa).

Positions 1-212 (MERKVSRIYL…QLEESTKPER (212 aa)) are interaction with IFFO1. At serine 53 the chain carries Phosphoserine; by PRKDC. Coiled coils occupy residues 131 to 165 (LDTI…FEKC) and 185 to 209 (NEKK…ESTK). An interaction with LIG4 region spans residues 180–211 (FILVLNEKKTKIRSLHKLLNEVQQLEESTKPE). Serine 193 bears the Phosphoserine; by PRKDC mark. A disordered region spans residues 203–326 (QLEESTKPER…RNSSPEDLFD (124 aa)). Basic and acidic residues predominate over residues 206 to 226 (ESTKPERENPCSDKTPEEHGL). A Phosphotyrosine modification is found at tyrosine 227. Serine 230 is subject to Phosphoserine. Threonine 231 carries the phosphothreonine modification. At serine 235 the chain carries Phosphoserine. Threonine 244 carries the phosphothreonine modification. Phosphoserine is present on serine 250. The residue at position 254 (serine 254) is a Phosphoserine; by PRKDC. Positions 264-269 (RKRRHR) match the Nuclear localization signal motif. Lysine 290 participates in a covalent cross-link: Glycyl lysine isopeptide (Lys-Gly) (interchain with G-Cter in ubiquitin). Position 295 is a phosphoserine; by PRKDC (serine 295). Serine 296 carries the post-translational modification Phosphoserine. Phosphoserine; by PRKDC is present on residues serine 307 and serine 312. A compositionally biased stretch (polar residues) spans 307–326 (SAENMSLETLRNSSPEDLFD). Position 315 is a phosphothreonine; by PRKDC (threonine 315). 2 positions are modified to phosphoserine; by PRKDC: serine 319 and serine 320.

Belongs to the XRCC4-XLF family. XRCC4 subfamily. In terms of assembly, homodimer and homotetramer in solution. Interacts with NHEJ1/XLF; the interaction is direct and is mediated via a head-to-head interaction between N-terminal head regions. Interacts with LIG4; the LIG4-XRCC4 subcomplex has a 1:2 stoichiometry and XRCC4 is required for LIG4 stability. Component of the core long-range non-homologous end joining (NHEJ) complex (also named DNA-PK complex) composed of PRKDC, LIG4, XRCC4, XRCC6/Ku70, XRCC5/Ku86 and NHEJ1/XLF. Additional component of the NHEJ complex includes PAXX. Following autophosphorylation, PRKDC dissociates from DNA, leading to formation of the short-range NHEJ complex, composed of LIG4, XRCC4, XRCC6/Ku70, XRCC5/Ku86 and NHEJ1/XLF. Interacts with PRKDC; the interaction is direct. Interacts with XRCC6/Ku70; the interaction is direct. Interacts with APTX and APLF. Forms a heterotetramer with IFFO1; the interaction involves LIG4-free XRCC4 and leads to the relocalization of IFFO1 to the sites of DNA damage. Interacts with PNKP; mainly interacts with PNKP when phosphorylated at Thr-231, but is also able to interact at much lower level with PNKP when not unphosphorylated. Interacts with POLL (DNA polymerase lambda). As to quaternary structure, interacts with XKR4; interacts with the processed form of XKR4, which is cleaved by caspase. Phosphorylated by PRKDC at the C-terminus in response to DNA damage; Ser-254 and Ser-312 constitute the main phosphorylation sites. Phosphorylation by PRKDC at the C-terminus of XRCC4 and NHEJ1/XLF are highly redundant and regulate ability of the XRCC4-NHEJ1/XLF subcomplex to bridge DNA. Phosphorylation by PRKDC does not prevent interaction with NHEJ1/XLF but disrupts ability to bridge DNA and promotes detachment from DNA. Phosphorylation at Ser-319 and Ser-320 by PRKDC promotes recognition by the SCF(FBXW7) complex and subsequent ubiquitination via 'Lys-63'-linked ubiquitin. Phosphorylation at Thr-231 by CK2 promotes interaction with PNKP; regulating PNKP activity and localization to DNA damage sites. Phosphorylation by CK2 promotes interaction with APTX. Post-translationally, ubiquitinated at Lys-290 by the SCF(FBXW7) complex via 'Lys-63'-linked ubiquitination, thereby promoting double-strand break repair: the SCF(FBXW7) complex specifically recognizes XRCC4 when phosphorylated at Ser-319 and Ser-320 by PRKDC, and 'Lys-63'-linked ubiquitination facilitates DNA non-homologous end joining (NHEJ) by enhancing association with XRCC5/Ku80 and XRCC6/Ku70. Monoubiquitinated. In terms of processing, undergoes proteolytic processing by caspase-3 (CASP3). This generates the protein XRCC4, C-terminus (XRCC4/C), which translocates to the cytoplasm and activates phospholipid scramblase activity of XKR4, thereby promoting phosphatidylserine exposure on apoptotic cell surface.

It localises to the nucleus. The protein resides in the chromosome. It is found in the cytoplasm. Its function is as follows. DNA non-homologous end joining (NHEJ) core factor, required for double-strand break repair and V(D)J recombination. Acts as a scaffold protein that regulates recruitment of other proteins to DNA double-strand breaks (DSBs). Associates with NHEJ1/XLF to form alternating helical filaments that bridge DNA and act like a bandage, holding together the broken DNA until it is repaired. The XRCC4-NHEJ1/XLF subcomplex binds to the DNA fragments of a DSB in a highly diffusive manner and robustly bridges two independent DNA molecules, holding the broken DNA fragments in close proximity to one other. The mobility of the bridges ensures that the ends remain accessible for further processing by other repair factors. Plays a key role in the NHEJ ligation step of the broken DNA during DSB repair via direct interaction with DNA ligase IV (LIG4): the LIG4-XRCC4 subcomplex reseals the DNA breaks after the gap filling is completed. XRCC4 stabilizes LIG4, regulates its subcellular localization and enhances LIG4's joining activity. Binding of the LIG4-XRCC4 subcomplex to DNA ends is dependent on the assembly of the DNA-dependent protein kinase complex DNA-PK to these DNA ends. Promotes displacement of PNKP from processed strand break termini. Acts as an activator of the phospholipid scramblase activity of XKR4. This form, which is generated upon caspase-3 (CASP3) cleavage, translocates into the cytoplasm and interacts with XKR4, thereby promoting phosphatidylserine scramblase activity of XKR4 and leading to phosphatidylserine exposure on apoptotic cell surface. The chain is DNA repair protein XRCC4 from Mus musculus (Mouse).